The primary structure comprises 671 residues: NADPH--cytochrome P450 reductase (671 aa).

The Lumenal portion of the chain corresponds to 1 to 14 (MSAEHVEEVVSEEP). A helical membrane pass occupies residues 15–35 (FLGTLDIALLVVLLVGATWYF). At 36–671 (MRSRKKEEAP…QKRYSADVWS (636 aa)) the chain is on the cytoplasmic side. Positions 77 to 221 (LVVFYGSQTG…DFITWKDRFW (145 aa)) constitute a Flavodoxin-like domain. FMN is bound by residues 83–88 (SQTGTA), 135–138 (ATYG), 170–179 (LGNKTYEHYN), and Asp205. Residues 276–515 (KNPFLASVIV…FIRKSQFRLP (240 aa)) enclose the FAD-binding FR-type domain. Arg295 contributes to the NADP(+) binding site. FAD is bound by residues 451–454 (RYYS), 469–471 (TAV), Tyr475, and 485–488 (GVAT). NADP(+) contacts are provided by residues Thr529, 589–590 (SR), 595–599 (KIYVT), and Asp632. Trp670 serves as a coordination point for FAD.

It belongs to the NADPH--cytochrome P450 reductase family. In the N-terminal section; belongs to the flavodoxin family. This sequence in the C-terminal section; belongs to the flavoprotein pyridine nucleotide cytochrome reductase family. It depends on FAD as a cofactor. Requires FMN as cofactor.

It localises to the endoplasmic reticulum membrane. It carries out the reaction 2 oxidized [cytochrome P450] + NADPH = 2 reduced [cytochrome P450] + NADP(+) + H(+). In terms of biological role, this enzyme is required for electron transfer from NADP to cytochrome P450 in microsomes. It can also provide electron transfer to heme oxygenase and cytochrome B5. This Musca domestica (House fly) protein is NADPH--cytochrome P450 reductase.